The sequence spans 333 residues: GTPase Obg (333 aa).

The Obg domain maps to 1–159 (MQFIDLAEIH…RHLRLELKLL (159 aa)). The OBG-type G domain occupies 160-328 (AEVGIIGLPN…LLEAVWQELG (169 aa)). GTP-binding positions include 166–173 (GLPNAGKS), 191–195 (FTTLV), 213–216 (DIPG), 280–283 (NKID), and 309–311 (SAV). S173 and T193 together coordinate Mg(2+).

Belongs to the TRAFAC class OBG-HflX-like GTPase superfamily. OBG GTPase family. In terms of assembly, monomer. It depends on Mg(2+) as a cofactor.

Its subcellular location is the cytoplasm. An essential GTPase which binds GTP, GDP and possibly (p)ppGpp with moderate affinity, with high nucleotide exchange rates and a fairly low GTP hydrolysis rate. Plays a role in control of the cell cycle, stress response, ribosome biogenesis and in those bacteria that undergo differentiation, in morphogenesis control. This Thermosynechococcus vestitus (strain NIES-2133 / IAM M-273 / BP-1) protein is GTPase Obg.